Consider the following 332-residue polypeptide: Biotin synthase (332 aa).

The 230-residue stretch at 53-282 folds into the Radical SAM core domain; it reads HFGKKVKLNM…TKEIRISGGR (230 aa). Cys-71, Cys-75, and Cys-78 together coordinate [4Fe-4S] cluster. Positions 115, 147, 207, and 277 each coordinate [2Fe-2S] cluster.

It belongs to the radical SAM superfamily. Biotin synthase family. As to quaternary structure, homodimer. It depends on [4Fe-4S] cluster as a cofactor. Requires [2Fe-2S] cluster as cofactor.

It catalyses the reaction (4R,5S)-dethiobiotin + (sulfur carrier)-SH + 2 reduced [2Fe-2S]-[ferredoxin] + 2 S-adenosyl-L-methionine = (sulfur carrier)-H + biotin + 2 5'-deoxyadenosine + 2 L-methionine + 2 oxidized [2Fe-2S]-[ferredoxin]. Its pathway is cofactor biosynthesis; biotin biosynthesis; biotin from 7,8-diaminononanoate: step 2/2. Its function is as follows. Catalyzes the conversion of dethiobiotin (DTB) to biotin by the insertion of a sulfur atom into dethiobiotin via a radical-based mechanism. In Bacillus cereus (strain ATCC 10987 / NRS 248), this protein is Biotin synthase.